The sequence spans 731 residues: 1,4-alpha-glucan branching enzyme GlgB (731 aa).

Asp408 functions as the Nucleophile in the catalytic mechanism. Glu461 (proton donor) is an active-site residue.

The protein belongs to the glycosyl hydrolase 13 family. GlgB subfamily. As to quaternary structure, monomer.

The catalysed reaction is Transfers a segment of a (1-&gt;4)-alpha-D-glucan chain to a primary hydroxy group in a similar glucan chain.. It functions in the pathway glycan biosynthesis; glycogen biosynthesis. In terms of biological role, catalyzes the formation of the alpha-1,6-glucosidic linkages in glycogen by scission of a 1,4-alpha-linked oligosaccharide from growing alpha-1,4-glucan chains and the subsequent attachment of the oligosaccharide to the alpha-1,6 position. This chain is 1,4-alpha-glucan branching enzyme GlgB, found in Corynebacterium glutamicum (strain ATCC 13032 / DSM 20300 / JCM 1318 / BCRC 11384 / CCUG 27702 / LMG 3730 / NBRC 12168 / NCIMB 10025 / NRRL B-2784 / 534).